Reading from the N-terminus, the 124-residue chain is Cytoinsectotoxin-4 (124 aa).

The first 19 residues, 1–19, serve as a signal peptide directing secretion; the sequence is MKCFILAAALVLAFACIAA. Positions 20–62 are excised as a propeptide; that stretch reads SEPAETENEDLDDLSDLEDEEWLDELEEAAEYLESLREFEESR. Phenylalanine amide is present on Phe123.

Belongs to the cationic peptide 06 (cytoinsectotoxin) family. In terms of tissue distribution, expressed by the venom gland.

Its subcellular location is the secreted. Its function is as follows. Insecticidal and antimicrobial peptide. Has insecticidal activity against larvae of flesh fly S.carnaria. Has antibacterial activity against Gram-positive bacterium B.subtilis B-501 (MIC=2.5 uM) and Gram-negative bacterium E.coli DH5alpha (MIC=10 uM). The polypeptide is Cytoinsectotoxin-4 (Lachesana tarabaevi (Spider)).